The sequence spans 311 residues: Inositol oxygenase 1 (311 aa).

Residues 1–11 show a composition bias toward basic and acidic residues; the sequence is MTILIDRHSDQ. Positions 1 to 29 are disordered; sequence MTILIDRHSDQNDAGDEIVEKNQGNGKEE. Residues arginine 52 and 109-111 contribute to the substrate site; that span reads DES. Histidine 122, histidine 147, and aspartate 148 together coordinate Fe cation. Substrate is bound by residues lysine 151 and 168–169; that span reads GD. Fe cation is bound by residues histidine 220, histidine 246, and aspartate 279. 246 to 247 lines the substrate pocket; sequence HS.

This sequence belongs to the myo-inositol oxygenase family. The cofactor is Fe cation. In terms of tissue distribution, expressed in roots, young leaves, stems, flowers and siliques.

Its subcellular location is the cytoplasm. It catalyses the reaction myo-inositol + O2 = D-glucuronate + H2O + H(+). It participates in polyol metabolism; myo-inositol degradation into D-glucuronate; D-glucuronate from myo-inositol: step 1/1. Catalyzes the oxygenative cleavage of myo-inositol to D-glucuronate. Involved in the biosynthesis of UDP-glucuronic acid (UDP-GlcA), providing nucleotide sugars for cell-wall polymers. May be also involved in plant ascorbate biosynthesis. This Arabidopsis thaliana (Mouse-ear cress) protein is Inositol oxygenase 1 (MIOX1).